Consider the following 96-residue polypeptide: MHVTLVEINVHDDKVEQFIDVFRQNHLGSIKEPGNLRFDVLQDPQVPTRFYIYEAYVDEQAVAFHKTTPHYKTCVEQLEPLMTGPRTKKVFMGLMP.

In terms of domain architecture, ABM spans 2-91 (HVTLVEINVH…MTGPRTKKVF (90 aa)).

It belongs to the LsrG family. As to quaternary structure, homodimer.

The protein resides in the cytoplasm. The catalysed reaction is (2S)-2-hydroxy-3,4-dioxopentyl phosphate = 3-hydroxy-2,4-dioxopentyl phosphate. In terms of biological role, involved in the degradation of phospho-AI-2, thereby terminating induction of the lsr operon and closing the AI-2 signaling cycle. Catalyzes the conversion of (4S)-4-hydroxy-5-phosphonooxypentane-2,3-dione (P-DPD) to 3-hydroxy-5-phosphonooxypentane-2,4-dione (P-HPD). The protein is (4S)-4-hydroxy-5-phosphonooxypentane-2,3-dione isomerase of Salmonella choleraesuis (strain SC-B67).